The primary structure comprises 432 residues: MDRIAITGGAQLNGIIPVSGAKNSAIKLMAASLLTDQPLRLTNMPRLADTKFLGKLLTRLGAQVDEREGLDGSETVLHAAEITSGFAPYDLVRQMRASFNVLGPLIARTGQAKVSLPGGCTIGARPVDLHLQALEALGAKIDLHEGYVYAQAPRGLKGAEITFPFVSVGATEHAMLAAVLADGVTHIHNAACEPELLDLQICLNAMGAKVEGAGTPTITITGVAKLHGATHSVIPDRIEMGTYAVAAAMAGGEVQLTRARPELIDSLLVKLEEAGAGVVRTEDGVIIKRDGTRLNAVDVETQPYPGFATDLQAQFMALMTTAKGESRIRETIFENRFMHAPELMRLGADISVSGGEAIVRGVDRLEGAEVMATDLRASVSLVIAGLVARGETTVSRIYHLDRGFERLEEKLGACGAQVRRIKGDAEGGPDHD.

22–23 (KN) contacts phosphoenolpyruvate. A UDP-N-acetyl-alpha-D-glucosamine-binding site is contributed by Arg96. The active-site Proton donor is the Cys120. 2-(S-cysteinyl)pyruvic acid O-phosphothioketal is present on Cys120. UDP-N-acetyl-alpha-D-glucosamine contacts are provided by residues 125 to 129 (RPVDL), Asp310, and Ile332.

It belongs to the EPSP synthase family. MurA subfamily.

Its subcellular location is the cytoplasm. The catalysed reaction is phosphoenolpyruvate + UDP-N-acetyl-alpha-D-glucosamine = UDP-N-acetyl-3-O-(1-carboxyvinyl)-alpha-D-glucosamine + phosphate. It participates in cell wall biogenesis; peptidoglycan biosynthesis. Functionally, cell wall formation. Adds enolpyruvyl to UDP-N-acetylglucosamine. This is UDP-N-acetylglucosamine 1-carboxyvinyltransferase from Caulobacter sp. (strain K31).